The chain runs to 230 residues: Type 4 apparatus protein DotY (230 aa).

Residues 202–230 (EPKALETKREEIRQEIESGAEAPTTQSIR) are disordered. Residues 204–217 (KALETKREEIRQEI) show a composition bias toward basic and acidic residues.

In terms of assembly, the T4BSS is a complex nanomachine composed of several subcomplexes. This subunit is part of the Type IV Coupling Complex (T4CC), a subcomplex composed of the DotLMNYZ core and the IcmSW-LvgA adapter subunits, linked by the C-terminal tail of DotL. Six DotLMNYZ hetero-pentameric units may assemble into a hexameric nanomachine, forming an inner membrane channel for effectors to pass through. Interacts exclusively with DotZ. DotY and DotZ are co-dependent for the assembly into the T4CC.

It localises to the cytoplasm. In terms of biological role, component of the Dot/Icm type IVB secretion system (T4BSS), which is used to inject bacterial effector proteins into eukaryotic host cells. Part of a subcomplex which recruits effector proteins and delivers them to the core transmembrane subcomplex. DotY and DotZ play a role in effector translocation, but are not essential and do not influence the stability of the subcomplex main components. The DotY/DotZ main function is to optimize secretion by modulating the delivery trajectory of the IcmSW module and the localization of the machinery to the poles. The polypeptide is Type 4 apparatus protein DotY (Legionella pneumophila subsp. pneumophila (strain Philadelphia 1 / ATCC 33152 / DSM 7513)).